The primary structure comprises 804 residues: Probable replication endonuclease from prophage-like region (804 aa).

Catalysis depends on O-(5'-phospho-DNA)-tyrosine intermediate residues Tyr498 and Tyr502.

This sequence belongs to the phage GPA family.

Possible endonuclease which induces a single-strand cut and initiates DNA replication. This is Probable replication endonuclease from prophage-like region from Shigella boydii serotype 4 (strain Sb227).